The chain runs to 143 residues: Ribosome maturation factor RimP (143 aa).

The protein belongs to the RimP family.

The protein localises to the cytoplasm. Functionally, required for maturation of 30S ribosomal subunits. This is Ribosome maturation factor RimP from Neisseria gonorrhoeae (strain ATCC 700825 / FA 1090).